Consider the following 1515-residue polypeptide: Apolipophorin (1515 aa).

One can recognise a VWFD domain in the interval 952–1118 (LRGVVVNGQH…NSYRLASSCP (167 aa)). Cysteine 976 and cysteine 1117 are disulfide-bonded. Asparagine 988 is a glycosylation site (N-linked (GlcNAc...) asparagine).

In terms of tissue distribution, hemolymph.

It is found in the secreted. Functionally, mediates transport for various types of lipids in hemolymph. Acts by forming lipoprotein particles that bind lipoproteins and lipids. Binds the A.niger cell wall component alpha-1,3-glucan, a fungal pathogen-associated molecular pattern (PAMP) that activates the host immune response. The protein is Apolipophorin of Galleria mellonella (Greater wax moth).